Consider the following 172-residue polypeptide: Protein GrpE (172 aa).

This sequence belongs to the GrpE family. In terms of assembly, homodimer.

The protein resides in the cytoplasm. Participates actively in the response to hyperosmotic and heat shock by preventing the aggregation of stress-denatured proteins, in association with DnaK and GrpE. It is the nucleotide exchange factor for DnaK and may function as a thermosensor. Unfolded proteins bind initially to DnaJ; upon interaction with the DnaJ-bound protein, DnaK hydrolyzes its bound ATP, resulting in the formation of a stable complex. GrpE releases ADP from DnaK; ATP binding to DnaK triggers the release of the substrate protein, thus completing the reaction cycle. Several rounds of ATP-dependent interactions between DnaJ, DnaK and GrpE are required for fully efficient folding. The chain is Protein GrpE from Thermotoga maritima (strain ATCC 43589 / DSM 3109 / JCM 10099 / NBRC 100826 / MSB8).